The primary structure comprises 24 residues: Humanin-like 10 (24 aa).

This sequence belongs to the humanin family. As to expression, expressed in mature brain, thyroid gland and testis.

The protein resides in the secreted. It is found in the cytoplasm. Plays a role as a neuroprotective and antiapoptotic factor. The sequence is that of Humanin-like 10 from Homo sapiens (Human).